The primary structure comprises 345 residues: Calcium uniporter regulatory subunit MCUb, mitochondrial (345 aa).

Residues 1-44 (MPGALSGRRMLPSGLCLGRWQLLRTIRARGRGDPRELPSTPQVL) constitute a mitochondrion transit peptide. A coiled-coil region spans residues 188–221 (EIQKRRERHLMAKIDHLQEQLRPLEQVKAAIEAR). Transmembrane regions (helical) follow at residues 229–249 (LLWA…WLTW) and 259–279 (PVTF…FIIT). Residues 306-334 (FDVEQYNKLKEDLAEATESLESVRRSLRL) adopt a coiled-coil conformation.

This sequence belongs to the MCU (TC 1.A.77) family. Homooligomer. Associates with the uniplex complex, composed of MCU, MICU1, MICU2 and EMRE/SMDT1, inhibiting its activity. Detected in lung, brain and heart, and at lower levels in white fat, skeletal muscle and spleen. Detected at very low levels in kidney and liver. Highly expressed in macrophages during the progression of skeletal muscle regeneration.

The protein resides in the mitochondrion inner membrane. Functionally, negative regulator of the mitochondrial calcium uniporter (MCU), a channel that mediates calcium uptake into the mitochondrial matrix. MCUB is required to limit mitochondrial calcium overload during stress. Acts as a dominant-negative regulator that displaces MCU from the functional uniplex complex and thereby decreases the association of calcium sensors MICU1 and MICU2, preventing channel gating. Mitochondrial calcium homeostasis plays key roles in mitochondrial metabolism. Acts as an important regulator of mitochondrial metabolism in response to stress in muscle cells: induced in response to fasting, leading to restrict mitochondrial calcium uptake, resulting in reprogramming of mitochondria toward fatty acid oxidation preference. Acts as a regulator of macrophage polarization during skeletal muscle regeneration: inhibition of mitochondrial calcium uptake drives differentiation of macrophages with anti-inflammatory profile, promoting the differentiation and fusion of satellite cells. The sequence is that of Calcium uniporter regulatory subunit MCUb, mitochondrial from Mus musculus (Mouse).